The sequence spans 532 residues: MKYIVVTGGVMSGLGKGITAASIGRLFVDMGYRVIPIKIDPYINIDAGTMNPFQHGEVYVLKDGTEVDLDLGHYERFIGEEVTGDHNITTGKIYKRVIEKERKGDYLGQTVQIIPHVTDEIKSWIRRVAKESNAEICLVEIGGTVGDIEGMPFLEAIRQMHNEEKEEDFALVHVTLVPLDAGGEQKTKPTQHSVKELRELGLHPDVIVGRCSERLKPATKKKIALFCDVPEEAVISNEDAEDIYEVPLIFKREKLDEYLMRKLNLRAKESRKEWEEMVKRMKTLYEEASIAIVGKYVDVRDAYLSIKEALKHGGIEAGCKVNIVWVDSEDLENVDDFTLDVDGILVPGGFGARGAEGKIRAIEYARENGVPFLGICFGFQLAVIEFARNVVGFSEANSTELDENTPHPVIDLLPEQKGIDEMGGTMRLGDIEVTIKPGTIAHKLYGSEKVVERHRHRYEVNPEYIEKIESKGLVFSAYSDGGRRMEIAELPDHPFFFATQFHPEFKSRPYRPSPPFVGFVRAALKYRREEEI.

Residues 1 to 265 form an amidoligase domain region; the sequence is MKYIVVTGGV…DEYLMRKLNL (265 aa). A CTP-binding site is contributed by Ser12. Ser12 serves as a coordination point for UTP. ATP contacts are provided by residues 13-18 and Asp70; that span reads GLGKGI. Residues Asp70 and Glu140 each coordinate Mg(2+). CTP-binding positions include 147–149, 186–191, and Lys222; these read DIE and KTKPTQ. UTP contacts are provided by residues 186–191 and Lys222; that span reads KTKPTQ. The Glutamine amidotransferase type-1 domain occupies 289-529; it reads SIAIVGKYVD…VRAALKYRRE (241 aa). Gly349 contributes to the L-glutamine binding site. Cys376 (nucleophile; for glutamine hydrolysis) is an active-site residue. L-glutamine contacts are provided by residues 377–380, Glu400, and Arg457; that span reads FGFQ. Residues His502 and Glu504 contribute to the active site.

This sequence belongs to the CTP synthase family. In terms of assembly, homotetramer.

It catalyses the reaction UTP + L-glutamine + ATP + H2O = CTP + L-glutamate + ADP + phosphate + 2 H(+). It carries out the reaction L-glutamine + H2O = L-glutamate + NH4(+). The catalysed reaction is UTP + NH4(+) + ATP = CTP + ADP + phosphate + 2 H(+). It participates in pyrimidine metabolism; CTP biosynthesis via de novo pathway; CTP from UDP: step 2/2. Allosterically activated by GTP, when glutamine is the substrate; GTP has no effect on the reaction when ammonia is the substrate. The allosteric effector GTP functions by stabilizing the protein conformation that binds the tetrahedral intermediate(s) formed during glutamine hydrolysis. Inhibited by the product CTP, via allosteric rather than competitive inhibition. Its function is as follows. Catalyzes the ATP-dependent amination of UTP to CTP with either L-glutamine or ammonia as the source of nitrogen. Regulates intracellular CTP levels through interactions with the four ribonucleotide triphosphates. This is CTP synthase from Archaeoglobus fulgidus (strain ATCC 49558 / DSM 4304 / JCM 9628 / NBRC 100126 / VC-16).